Here is a 334-residue protein sequence, read N- to C-terminus: Nucleoid-associated protein PMI0825 (334 aa).

The protein belongs to the YejK family.

It is found in the cytoplasm. The protein localises to the nucleoid. The polypeptide is Nucleoid-associated protein PMI0825 (Proteus mirabilis (strain HI4320)).